The sequence spans 303 residues: Ribosomal large subunit pseudouridine synthase C (303 aa).

The 60-residue stretch at 11 to 70 folds into the S4 RNA-binding domain; it reads FRLDKYLKRLYPSLTQGVIEKALRQKQVTVNFQKAEANLRVKEGDTIFINDYFNLPVTQH. Asp140 is a catalytic residue.

Belongs to the pseudouridine synthase RluA family.

It catalyses the reaction uridine(955/2504/2580) in 23S rRNA = pseudouridine(955/2504/2580) in 23S rRNA. Its function is as follows. Responsible for synthesis of pseudouridine from uracil at positions 955, 2504 and 2580 in 23S ribosomal RNA. In Rickettsia typhi (strain ATCC VR-144 / Wilmington), this protein is Ribosomal large subunit pseudouridine synthase C (rluC).